The chain runs to 355 residues: Uroporphyrinogen decarboxylase (355 aa).

Substrate is bound by residues 27-31 (RQAGR), phenylalanine 46, aspartate 78, tyrosine 155, serine 210, and histidine 328.

It belongs to the uroporphyrinogen decarboxylase family. Homodimer.

It localises to the cytoplasm. The catalysed reaction is uroporphyrinogen III + 4 H(+) = coproporphyrinogen III + 4 CO2. Its pathway is porphyrin-containing compound metabolism; protoporphyrin-IX biosynthesis; coproporphyrinogen-III from 5-aminolevulinate: step 4/4. Its function is as follows. Catalyzes the decarboxylation of four acetate groups of uroporphyrinogen-III to yield coproporphyrinogen-III. In Pseudomonas aeruginosa (strain ATCC 15692 / DSM 22644 / CIP 104116 / JCM 14847 / LMG 12228 / 1C / PRS 101 / PAO1), this protein is Uroporphyrinogen decarboxylase.